A 400-amino-acid chain; its full sequence is Lysophospholipid transporter LplT (400 aa).

A run of 12 helical transmembrane segments spans residues 19–39 (VIVAQFLSAFGDNALLFATLA), 53–73 (VLQMVFVGAYILFAPFVGQIA), 91–111 (AGAAGICLGINPFVGYTLVGI), 139–159 (MMEASTIAAILLGSVAGGVLA), 164–184 (IAALVACALAYAGAVAANLFI), 195–213 (SWRLSAMTRSFFSACVVLW), 227–247 (LFWGAGVTLRFLLVLWVPVAL), 257–277 (YLNAMVAVGIVVGAGAAAKLV), 281–301 (TVSRCMPAGILIGVVVAIFSL), 304–324 (ALLPAYALLLLIGMLGGFFVV), 352–372 (NSAMLLMLGLYSLAVLVGVPA), and 373–393 (VAIGIGFGVLFALAIAALWIW).

Belongs to the major facilitator superfamily. LplT (TC 2.A.1.42) family.

It is found in the cell inner membrane. Catalyzes the facilitated diffusion of 2-acyl-glycero-3-phosphoethanolamine (2-acyl-GPE) into the cell. This chain is Lysophospholipid transporter LplT, found in Salmonella paratyphi B (strain ATCC BAA-1250 / SPB7).